The sequence spans 365 residues: tRNA(Met) cytidine acetate ligase (365 aa).

Residues 7–20, Gly96, Asn152, and Arg175 each bind ATP; that span reads IAEF…HKYL.

The protein belongs to the TmcAL family.

The protein resides in the cytoplasm. The catalysed reaction is cytidine(34) in elongator tRNA(Met) + acetate + ATP = N(4)-acetylcytidine(34) in elongator tRNA(Met) + AMP + diphosphate. In terms of biological role, catalyzes the formation of N(4)-acetylcytidine (ac(4)C) at the wobble position of elongator tRNA(Met), using acetate and ATP as substrates. First activates an acetate ion to form acetyladenylate (Ac-AMP) and then transfers the acetyl group to tRNA to form ac(4)C34. The protein is tRNA(Met) cytidine acetate ligase of Streptococcus pneumoniae (strain ATCC 700669 / Spain 23F-1).